Reading from the N-terminus, the 1641-residue chain is Histone-lysine N-methyltransferase SETD1 (1641 aa).

The interval 1-23 (MQDVRNINLVNNSSNSHDSSLAN) is disordered. Over residues 8–23 (NLVNNSSNSHDSSLAN) the composition is skewed to low complexity. One can recognise an RRM domain in the interval 101–179 (VEVTIVNLND…KILDVFCDPF (79 aa)). 6 disordered regions span residues 236–384 (YTTQ…IDQR), 537–596 (APPF…SDEE), 831–915 (RIRK…SSSS), 930–949 (KART…NLNQ), 1119–1155 (QEKR…RKTA), and 1205–1226 (NSKG…SSQA). Positions 244-284 (IPNRSRDRNWNRDKERERDRHFKERSRHSSERSYDRDRGMR) are enriched in basic and acidic residues. The span at 291-300 (IRRRRTFYRR) shows a compositional bias: basic residues. Basic and acidic residues-rich tracts occupy residues 308–341 (EDSR…ESFR) and 349–384 (KGRD…IDQR). The segment covering 556-568 (EVFSDVNSDSNNS) has biased composition (low complexity). 2 stretches are compositionally biased toward basic and acidic residues: residues 569–579 (ENKKRSCEKNN) and 844–867 (NFLE…KEDS). Residues 904 to 915 (SASSFFSSSSSS) show a composition bias toward low complexity. Basic and acidic residues-rich tracts occupy residues 930–939 (KARTSEEDSP) and 1119–1128 (QEKRIEKSLD). The stretch at 1091-1132 (SEEEKEYQERRKRNTEYMAQMEREFLEEQEKRIEKSLDKNLQ) forms a coiled coil. 2 stretches are compositionally biased toward polar residues: residues 1129 to 1145 (KNLQ…NSPR) and 1205 to 1217 (NSKG…QSPV). Positions 1473 to 1478 (RSNQRR) match the RxxxRR motif motif. In terms of domain architecture, SET spans 1502–1619 (KQLKFAKSAI…INEEITYDYK (118 aa)). Tyr1618 lines the S-adenosyl-L-methionine pocket. The 17-residue stretch at 1625–1641 (EKIPCLCGAQGCRGTLN) folds into the Post-SET domain.

Belongs to the class V-like SAM-binding methyltransferase superfamily. As to quaternary structure, component of the Set1C/COMPASS complex, composed at least of the catalytic subunit Set1, wds/WDR5, Wdr82, Rbbp5, ash2, Cfp1/CXXC1, hcf and Dpy-30L1.

The protein resides in the nucleus. It localises to the chromosome. It carries out the reaction L-lysyl(4)-[histone H3] + 3 S-adenosyl-L-methionine = N(6),N(6),N(6)-trimethyl-L-lysyl(4)-[histone H3] + 3 S-adenosyl-L-homocysteine + 3 H(+). The catalysed reaction is N(6)-methyl-L-lysyl(4)-[histone H3] + S-adenosyl-L-methionine = N(6),N(6)-dimethyl-L-lysyl(4)-[histone H3] + S-adenosyl-L-homocysteine + H(+). The enzyme catalyses N(6),N(6)-dimethyl-L-lysyl(4)-[histone H3] + S-adenosyl-L-methionine = N(6),N(6),N(6)-trimethyl-L-lysyl(4)-[histone H3] + S-adenosyl-L-homocysteine + H(+). In terms of biological role, catalytic component of the COMPASS (Set1C) complex that specifically mono-, di- and trimethylates histone H3 to form H3K4me1/2/3. Binds RNAs which might negatively affect its histone methyltransferase activity. COMPASS recognizes ubiquitinated H2B on one face of the nucleosome which stimulates the methylation of H3 on the opposing face. Set1-dependent trimethylation regulates chromatin changes at active promoters that ensure optimal RNA polymerase II release into productive elongation, thereby contributing to optimal transcription. This chain is Histone-lysine N-methyltransferase SETD1, found in Drosophila melanogaster (Fruit fly).